The primary structure comprises 291 residues: Lipase (291 aa).

The signal sequence occupies residues 1 to 17; that stretch reads MRSSLVLFFVSAWTALA. Positions 18–22 are excised as a propeptide; sequence SPIRR. Cystine bridges form between C44-C290, C58-C63, and C126-C129. The active-site Nucleophile is the S168. Catalysis depends on charge relay system residues D223 and H280.

Belongs to the AB hydrolase superfamily. Lipase family.

It carries out the reaction a triacylglycerol + H2O = a diacylglycerol + a fatty acid + H(+). In Thermomyces lanuginosus (Humicola lanuginosa), this protein is Lipase (LIP).